The following is a 131-amino-acid chain: Small ribosomal subunit protein uS8 (131 aa).

Belongs to the universal ribosomal protein uS8 family. In terms of assembly, part of the 30S ribosomal subunit. Contacts proteins S5 and S12.

One of the primary rRNA binding proteins, it binds directly to 16S rRNA central domain where it helps coordinate assembly of the platform of the 30S subunit. This Azoarcus sp. (strain BH72) protein is Small ribosomal subunit protein uS8.